A 447-amino-acid polypeptide reads, in one-letter code: MSVFGFDNIPTWLWWLLAIYLATPFVLYVVQPYLFYEGKSTKTRILIVVLGDLGHSPRILYHARSFSKAGFQVELSGYVDSDIPTDILDDDNIEIHGLKKYGSEKGLLVKALKQGLQLCSMFWKLRAVDYILLQNPPTIPILPIAVVVKTFSRAKLIIDWHNLGYTILQMKFKDQFLHPLVLLAYLIEWIFAKFANYHLTVTKAMKTYLVEKFGIDGKKIAVLYDRPGKQFSPLKEADDREALLKQEFIAKYIPKEFDISKDKIFVTSTSFTPDEDISVLIGSFKIYENSFQKFDQTLPRILCFITGKGPLQEKIVKQVQDFKWDRVQVEFLWLSSEDYPKLLRLCDYGVSLHTSSSGLDLPMKILDMFGSGLPVICMNYPVLDELVQQNVNGLKFADRRELHEALIFSVKDEQVHQEIKRGALRESKNRWNESWESALSELKIIHK.

The Lumenal segment spans residues 1–8 (MSVFGFDN). A helical membrane pass occupies residues 9–29 (IPTWLWWLLAIYLATPFVLYV). Over 30 to 127 (VQPYLFYEGK…LCSMFWKLRA (98 aa)) the chain is Cytoplasmic. The helical intramembrane region spans 128–148 (VDYILLQNPPTIPILPIAVVV). At 149–447 (KTFSRAKLII…ALSELKIIHK (299 aa)) the chain is on the lumenal side.

The protein belongs to the glycosyltransferase group 1 family.

It is found in the endoplasmic reticulum membrane. It carries out the reaction an N,N'-diacetylchitobiosyl-diphospho-di-trans,poly-cis-dolichol + GDP-alpha-D-mannose = a beta-D-Man-(1-&gt;4)-beta-D-GlcNAc-(1-&gt;4)-alpha-D-GlcNAc-diphospho-di-trans,poly-cis-dolichol + GDP + H(+). The protein operates within protein modification; protein glycosylation. Functionally, participates in the formation of the lipid-linked precursor oligosaccharide for N-glycosylation. Involved in assembling the dolichol-pyrophosphate-GlcNAc(2)-Man(5) intermediate on the cytoplasmic surface of the ER. In Kluyveromyces lactis (strain ATCC 8585 / CBS 2359 / DSM 70799 / NBRC 1267 / NRRL Y-1140 / WM37) (Yeast), this protein is Chitobiosyldiphosphodolichol beta-mannosyltransferase (ALG1).